We begin with the raw amino-acid sequence, 503 residues long: Glutamate--tRNA ligase (503 aa).

The short motif at 12 to 22 is the 'HIGH' region element; that stretch reads PSPTGYLHVGG. A 'KMSKS' region motif is present at residues 259–263; the sequence is KLSKR. Lys-262 lines the ATP pocket.

The protein belongs to the class-I aminoacyl-tRNA synthetase family. Glutamate--tRNA ligase type 1 subfamily. As to quaternary structure, monomer.

It is found in the cytoplasm. It carries out the reaction tRNA(Glu) + L-glutamate + ATP = L-glutamyl-tRNA(Glu) + AMP + diphosphate. In terms of biological role, catalyzes the attachment of glutamate to tRNA(Glu) in a two-step reaction: glutamate is first activated by ATP to form Glu-AMP and then transferred to the acceptor end of tRNA(Glu). The protein is Glutamate--tRNA ligase of Chlorobaculum parvum (strain DSM 263 / NCIMB 8327) (Chlorobium vibrioforme subsp. thiosulfatophilum).